A 177-amino-acid polypeptide reads, in one-letter code: Adenine phosphoribosyltransferase (177 aa).

This sequence belongs to the purine/pyrimidine phosphoribosyltransferase family. In terms of assembly, homodimer.

The protein localises to the cytoplasm. The enzyme catalyses AMP + diphosphate = 5-phospho-alpha-D-ribose 1-diphosphate + adenine. It functions in the pathway purine metabolism; AMP biosynthesis via salvage pathway; AMP from adenine: step 1/1. In terms of biological role, catalyzes a salvage reaction resulting in the formation of AMP, that is energically less costly than de novo synthesis. This chain is Adenine phosphoribosyltransferase, found in Leptospira interrogans serogroup Icterohaemorrhagiae serovar copenhageni (strain Fiocruz L1-130).